A 556-amino-acid chain; its full sequence is Putative protein SPATA31F2P (556 aa).

Disordered regions lie at residues 133 to 154 and 210 to 231; these read ALKA…SGSD and LPKT…WVSP. Positions 144 to 154 are enriched in polar residues; it reads SGGQDNDSGSD.

Belongs to the SPATA31 family.

This chain is Putative protein SPATA31F2P, found in Homo sapiens (Human).